We begin with the raw amino-acid sequence, 86 residues long: Large ribosomal subunit protein bL31B (86 aa).

The protein belongs to the bacterial ribosomal protein bL31 family. Type B subfamily. As to quaternary structure, part of the 50S ribosomal subunit.

This chain is Large ribosomal subunit protein bL31B, found in Streptococcus pyogenes serotype M1.